Reading from the N-terminus, the 510-residue chain is ATP synthase subunit alpha (510 aa).

Residue 171 to 178 (GDRQTGKT) coordinates ATP.

It belongs to the ATPase alpha/beta chains family. As to quaternary structure, F-type ATPases have 2 components, CF(1) - the catalytic core - and CF(0) - the membrane proton channel. CF(1) has five subunits: alpha(3), beta(3), gamma(1), delta(1), epsilon(1). CF(0) has three main subunits: a(1), b(2) and c(9-12). The alpha and beta chains form an alternating ring which encloses part of the gamma chain. CF(1) is attached to CF(0) by a central stalk formed by the gamma and epsilon chains, while a peripheral stalk is formed by the delta and b chains.

It is found in the cell inner membrane. It carries out the reaction ATP + H2O + 4 H(+)(in) = ADP + phosphate + 5 H(+)(out). In terms of biological role, produces ATP from ADP in the presence of a proton gradient across the membrane. The alpha chain is a regulatory subunit. This is ATP synthase subunit alpha from Phenylobacterium zucineum (strain HLK1).